The chain runs to 65 residues: Large ribosomal subunit protein bL33m (65 aa).

The transit peptide at 1–8 (MLLSAVSF) directs the protein to the mitochondrion.

This sequence belongs to the bacterial ribosomal protein bL33 family. Component of the mitochondrial ribosome large subunit (39S) which comprises a 16S rRNA and about 50 distinct proteins.

Its subcellular location is the mitochondrion. The protein is Large ribosomal subunit protein bL33m (Mrpl33) of Mus musculus (Mouse).